We begin with the raw amino-acid sequence, 512 residues long: Centrosomal protein CCDC61 (512 aa).

M1 is subject to N-acetylmethionine. The interval 1–143 is head domain; the sequence is MDQPAGLQVD…PLPLPYQGKP (143 aa). 2 coiled-coil regions span residues 178-205 and 248-275; these read IWHLREQVSRLASEKRELEAQLGRSREE and CRRLAKELEEAKASERSLRARLKTLTSE. A disordered region spans residues 276-477; it reads LALYKRGRRT…KSLANSGGWV (202 aa). A Phosphothreonine modification is found at T285. Over residues 293–306 the composition is skewed to basic and acidic residues; the sequence is TREDRASSSRERSA. A phosphoserine mark is found at S334, S336, S373, and S376. Positions 407-425 are enriched in low complexity; it reads RSSSVDSFRSRCSSASSCS. A phosphoserine mark is found at S447 and S473.

This sequence belongs to the CCDC61 family. As to quaternary structure, forms homodimers (via head domain). Interacts with CEP170. Interacts with PCM1 and CEP131. Binds tubulin.

It localises to the cytoplasm. The protein resides in the cytoskeleton. It is found in the microtubule organizing center. The protein localises to the centrosome. Its subcellular location is the centriolar satellite. It localises to the cilium basal body. Microtubule-binding centrosomal protein required for centriole cohesion, independently of the centrosome-associated protein/CEP250 and rootletin/CROCC linker. In interphase, required for anchoring microtubule at the mother centriole subdistal appendages and for centrosome positioning. During mitosis, may be involved in spindle assembly and chromatin alignment by regulating the organization of spindle microtubules into a symmetrical structure. Has been proposed to play a role in CEP170 recruitment to centrosomes. However, this function could not be confirmed. Plays a non-essential role in ciliogenesis. The chain is Centrosomal protein CCDC61 from Homo sapiens (Human).